We begin with the raw amino-acid sequence, 122 residues long: Large ribosomal subunit protein uL14 (122 aa).

This sequence belongs to the universal ribosomal protein uL14 family. Part of the 50S ribosomal subunit. Forms a cluster with proteins L3 and L19. In the 70S ribosome, L14 and L19 interact and together make contacts with the 16S rRNA in bridges B5 and B8.

In terms of biological role, binds to 23S rRNA. Forms part of two intersubunit bridges in the 70S ribosome. The protein is Large ribosomal subunit protein uL14 of Corynebacterium kroppenstedtii (strain DSM 44385 / JCM 11950 / CIP 105744 / CCUG 35717).